The primary structure comprises 959 residues: Translation initiation factor IF-2 (959 aa).

Over residues 1–10 (MSDKTNDDKT) the composition is skewed to basic and acidic residues. Residues 1–374 (MSDKTNDDKT…SQMQETREKI (374 aa)) are disordered. Over residues 27–37 (EQSTVRQNFSH) the composition is skewed to polar residues. Composition is skewed to low complexity over residues 63–118 (AAAA…VTKP) and 128–138 (QRPGGQQAQRP). Composition is skewed to basic and acidic residues over residues 154 to 225 (SEMD…EAAK) and 232 to 241 (ARSERRDDAR). Over residues 246–284 (GARPQQAGRPQGGRPQPAGRPQQGSPRPAPIIADAAPIA) the composition is skewed to low complexity. Basic and acidic residues predominate over residues 318–333 (PEVRAPKVVKGEDDRR). The tr-type G domain occupies 457–626 (SRPPVVTIMG…LLQAEMLDLK (170 aa)). Residues 466–473 (GHVDHGKT) are G1. 466–473 (GHVDHGKT) provides a ligand contact to GTP. The segment at 491–495 (GITQH) is G2. Positions 512-515 (DTPG) are G3. Residues 512-516 (DTPGH) and 566-569 (NKID) each bind GTP. Positions 566-569 (NKID) are G4. A G5 region spans residues 602 to 604 (SAK).

The protein belongs to the TRAFAC class translation factor GTPase superfamily. Classic translation factor GTPase family. IF-2 subfamily.

It localises to the cytoplasm. Its function is as follows. One of the essential components for the initiation of protein synthesis. Protects formylmethionyl-tRNA from spontaneous hydrolysis and promotes its binding to the 30S ribosomal subunits. Also involved in the hydrolysis of GTP during the formation of the 70S ribosomal complex. This chain is Translation initiation factor IF-2, found in Brucella canis (strain ATCC 23365 / NCTC 10854 / RM-666).